A 547-amino-acid polypeptide reads, in one-letter code: ATP synthase subunit alpha (547 aa).

173–180 (GDRATGKT) is a binding site for ATP. Residues 526–547 (PEAEALADEDVEQEQIVRQKRG) form a disordered region. A compositionally biased stretch (acidic residues) spans 528–538 (AEALADEDVEQ).

This sequence belongs to the ATPase alpha/beta chains family. F-type ATPases have 2 components, CF(1) - the catalytic core - and CF(0) - the membrane proton channel. CF(1) has five subunits: alpha(3), beta(3), gamma(1), delta(1), epsilon(1). CF(0) has three main subunits: a(1), b(2) and c(9-12). The alpha and beta chains form an alternating ring which encloses part of the gamma chain. CF(1) is attached to CF(0) by a central stalk formed by the gamma and epsilon chains, while a peripheral stalk is formed by the delta and b chains.

The protein localises to the cell membrane. It carries out the reaction ATP + H2O + 4 H(+)(in) = ADP + phosphate + 5 H(+)(out). Functionally, produces ATP from ADP in the presence of a proton gradient across the membrane. The alpha chain is a regulatory subunit. This Nocardioides sp. (strain ATCC BAA-499 / JS614) protein is ATP synthase subunit alpha.